The following is a 480-amino-acid chain: Coronin-2B (480 aa).

5 WD repeats span residues 85–125 (GHQG…LKRN), 135–177 (GHSR…KMID), 179–217 (HTDV…VLQE), 220–263 (CKNH…MPMI), and 265–308 (EEID…PYLS). A coiled-coil region spans residues 436–479 (NELLRMFFRQQDEIRRLKEELAQKDIRLRQLQLELKNLRNNPKN).

This sequence belongs to the WD repeat coronin family. As to quaternary structure, binds to F-actin and to vinculin.

It is found in the cytoplasm. The protein localises to the cytoskeleton. Its function is as follows. May play a role in the reorganization of neuronal actin structure. This Mus musculus (Mouse) protein is Coronin-2B (Coro2b).